The following is a 117-amino-acid chain: Large ribosomal subunit protein bL20 (117 aa).

This sequence belongs to the bacterial ribosomal protein bL20 family.

Its function is as follows. Binds directly to 23S ribosomal RNA and is necessary for the in vitro assembly process of the 50S ribosomal subunit. It is not involved in the protein synthesizing functions of that subunit. In Aliivibrio fischeri (strain ATCC 700601 / ES114) (Vibrio fischeri), this protein is Large ribosomal subunit protein bL20.